Reading from the N-terminus, the 27-residue chain is uncharacterized protein (27 aa).

This is an uncharacterized protein from Saccharomyces cerevisiae (strain ATCC 204508 / S288c) (Baker's yeast).